The chain runs to 926 residues: OTU domain-containing protein 7A (926 aa).

Phosphoserine is present on S121. The interval 170 to 413 (ERDLIEQATM…AVDPGKDWEW (244 aa)) is TRAF-binding. The tract at residues 185–452 (AGRLNWWSTV…VTWIRIPSET (268 aa)) is catalytic. The 177-residue stretch at 201 to 377 (LLPLATTGDG…QAHFSALVSM (177 aa)) folds into the OTU domain. D209 is a catalytic residue. The active-site Nucleophile is the C212. H370 functions as the Proton acceptor in the catalytic mechanism. 3 disordered regions span residues 455-517 (PLAQ…DSVA), 540-615 (GLVH…GDAW), and 671-779 (EQEQ…ARQS). The span at 484–494 (VCSNSNSNNGK) shows a compositional bias: low complexity. Basic and acidic residues predominate over residues 495–513 (NGKDKEKEKQRKDKDKTRA). The short motif at 497–512 (KDKEKEKQRKDKDKTR) is the Nuclear localization signal element. Low complexity-rich tracts occupy residues 579-595 (GASA…PSPT), 680-691 (AAAAAAATATAT), and 731-750 (SPGT…AASP). The span at 751-767 (GPGGGARRAAPGTGGPT) shows a compositional bias: gly residues. The residue at position 880 (R880) is an Omega-N-methylarginine. The A20-type zinc-finger motif lies at 884–919 (GPAQRRCQRENCAFYGRAETEHFCSYCYREELRRRR). Positions 890, 895, 907, and 910 each coordinate Zn(2+).

This sequence belongs to the peptidase C64 family.

Its subcellular location is the cytoplasm. It is found in the nucleus. The catalysed reaction is Thiol-dependent hydrolysis of ester, thioester, amide, peptide and isopeptide bonds formed by the C-terminal Gly of ubiquitin (a 76-residue protein attached to proteins as an intracellular targeting signal).. Deubiquitinase, which cleaves 'Lys-11'-linked polyubiquitin chains. The polypeptide is OTU domain-containing protein 7A (Otud7a) (Mus musculus (Mouse)).